Reading from the N-terminus, the 667-residue chain is High affinity sulfate transporter 1 (667 aa).

The segment at 16–38 is disordered; the sequence is ETRSNSSSHRHGGGGGGDDTTSL. 11 helical membrane passes run 106–126, 131–151, 156–176, 185–205, 208–228, 269–289, 296–316, 350–370, 425–445, 452–472, and 486–506; these read GDFI…LAYA, LDPW…AFMG, IAIG…SNEI, LRLA…LGVC, GFLI…GAAI, WETI…KYIA, FWVS…FVYI, GAGV…AIAI, VSNI…TPLF, VLAS…AMVL, and GAFF…AVAI. The STAS domain maps to 537–660; it reads QYPKAAQIPG…LTVADAVATY (124 aa).

It belongs to the SLC26A/SulP transporter (TC 2.A.53) family.

The protein resides in the membrane. Functionally, high-affinity H(+)/sulfate cotransporter that mediates the uptake of sulfate by plant roots from low concentrations of sulfate in the soil solution. This is High affinity sulfate transporter 1 (ST1) from Stylosanthes hamata (Caribbean stylo).